The primary structure comprises 972 residues: Serine/threonine-protein kinase ATG1 (972 aa).

The 302-residue stretch at 18–319 (YVVEKEIGRG…FTEFFSNGLV (302 aa)) folds into the Protein kinase domain. Residues 24–32 (IGRGSFAVV) and Lys48 contribute to the ATP site. Asp166 functions as the Proton acceptor in the catalytic mechanism. 5 disordered regions span residues 359–394 (KRAS…QSDQ), 424–444 (YNNQ…SNGR), 467–506 (ALQS…HRTT), 562–605 (ASQA…SRRP), and 743–764 (DDEE…NSSG). Basic and acidic residues predominate over residues 424 to 436 (YNNQEERSNEERQ). Residues 562–584 (ASQALQMARHSSTSVSAANTAKQ) show a composition bias toward polar residues. The segment covering 585–605 (TLLRRNSRTLSSSGASTSRRP) has biased composition (low complexity). The segment covering 750 to 759 (EHSPGAETYR) has biased composition (basic and acidic residues).

This sequence belongs to the protein kinase superfamily. Ser/Thr protein kinase family. APG1/unc-51/ULK1 subfamily. Homodimer. Forms a ternary complex with ATG13 and ATG17.

The protein resides in the cytoplasm. It localises to the preautophagosomal structure membrane. It carries out the reaction L-seryl-[protein] + ATP = O-phospho-L-seryl-[protein] + ADP + H(+). The enzyme catalyses L-threonyl-[protein] + ATP = O-phospho-L-threonyl-[protein] + ADP + H(+). Its function is as follows. Serine/threonine protein kinase involved in the cytoplasm to vacuole transport (Cvt) and found to be essential in autophagy, where it is required for the formation of autophagosomes. Involved in the clearance of protein aggregates which cannot be efficiently cleared by the proteasome. Required for selective autophagic degradation of the nucleus (nucleophagy) as well as for mitophagy which contributes to regulate mitochondrial quantity and quality by eliminating the mitochondria to a basal level to fulfill cellular energy requirements and preventing excess ROS production. Also involved in endoplasmic reticulum-specific autophagic process, in selective removal of ER-associated degradation (ERAD) substrates. Plays a key role in ATG9 and ATG23 cycling through the pre-autophagosomal structure and is necessary to promote ATG18 binding to ATG9 through phosphorylation of ATG9. Catalyzes phosphorylation of ATG4, decreasing the interaction between ATG4 and ATG8 and impairing deconjugation of PE-conjugated forms of ATG8. The protein is Serine/threonine-protein kinase ATG1 of Eremothecium gossypii (strain ATCC 10895 / CBS 109.51 / FGSC 9923 / NRRL Y-1056) (Yeast).